An 806-amino-acid polypeptide reads, in one-letter code: Protein translocase subunit SecA 2 (806 aa).

ATP is bound by residues Gln122, Gly140–Thr144, and Asp533.

The protein belongs to the SecA family. Monomer and homodimer. Part of the essential Sec protein translocation apparatus which comprises SecA, SecYEG and auxiliary proteins SecDF. Other proteins may also be involved.

Its subcellular location is the cell membrane. The protein localises to the cytoplasm. The catalysed reaction is ATP + H2O + cellular proteinSide 1 = ADP + phosphate + cellular proteinSide 2.. Part of the Sec protein translocase complex. Interacts with the SecYEG preprotein conducting channel. Has a central role in coupling the hydrolysis of ATP to the transfer of proteins into and across the cell membrane, serving as an ATP-driven molecular motor driving the stepwise translocation of polypeptide chains across the membrane. This Mycobacterium ulcerans (strain Agy99) protein is Protein translocase subunit SecA 2.